Consider the following 206-residue polypeptide: Large ribosomal subunit protein uL4 (206 aa).

The tract at residues 43-78 (ARSGNRKQKDREEVHHTTKKPWRQKGTGRARAGMSS) is disordered. Residues 49 to 58 (KQKDREEVHH) show a composition bias toward basic and acidic residues. Residues 59 to 70 (TTKKPWRQKGTG) show a composition bias toward basic residues.

Belongs to the universal ribosomal protein uL4 family. As to quaternary structure, part of the 50S ribosomal subunit.

Its function is as follows. One of the primary rRNA binding proteins, this protein initially binds near the 5'-end of the 23S rRNA. It is important during the early stages of 50S assembly. It makes multiple contacts with different domains of the 23S rRNA in the assembled 50S subunit and ribosome. In terms of biological role, forms part of the polypeptide exit tunnel. The protein is Large ribosomal subunit protein uL4 of Janthinobacterium sp. (strain Marseille) (Minibacterium massiliensis).